The sequence spans 499 residues: Probable aspartyl protease At4g16563 (499 aa).

A signal peptide spans 1 to 26 (MKTCLIFFLYTTILQYYFHFSVSSLS). Residues 83 to 487 (YLISLSVGSS…DLLNRRVGFA (405 aa)) form the Peptidase A1 domain. D101 is an active-site residue. Cysteines 111 and 119 form a disulfide. N-linked (GlcNAc...) asparagine glycans are attached at residues N175 and N211. The active site involves D353. C396 and C445 are joined by a disulfide. N400 and N415 each carry an N-linked (GlcNAc...) asparagine glycan.

The protein belongs to the peptidase A1 family.

The protein is Probable aspartyl protease At4g16563 of Arabidopsis thaliana (Mouse-ear cress).